Reading from the N-terminus, the 719-residue chain is Polyribonucleotide nucleotidyltransferase (719 aa).

Positions 491 and 497 each coordinate Mg(2+). The KH domain maps to 558–617 (PRMLTIKINPEKIRDVIGKGGATIRALTEETGTQIDISDDGTIVIASVDETQAKEAQRRI). The S1 motif domain occupies 627–695 (GQIYDGSVLR…DKGRLRLSIK (69 aa)).

The protein belongs to the polyribonucleotide nucleotidyltransferase family. Mg(2+) is required as a cofactor.

It is found in the cytoplasm. The catalysed reaction is RNA(n+1) + phosphate = RNA(n) + a ribonucleoside 5'-diphosphate. Involved in mRNA degradation. Catalyzes the phosphorolysis of single-stranded polyribonucleotides processively in the 3'- to 5'-direction. The protein is Polyribonucleotide nucleotidyltransferase of Bordetella parapertussis (strain 12822 / ATCC BAA-587 / NCTC 13253).